A 254-amino-acid chain; its full sequence is Proteasome activator complex subunit 3 (254 aa).

Residues K6 and K14 each carry the N6-acetyllysine modification. N6-acetyllysine; by P300/CBP is present on K195.

Homoheptamer. In terms of processing, acetylation at the major site Lys-195 is important for oligomerization and ability to degrade its target substrates. Deacetylated by SIRT1.

Its function is as follows. Implicated in immunoproteasome assembly and required for efficient antigen processing. The PA28 activator complex enhances the generation of class I binding peptides by altering the cleavage pattern of the proteasome. In Gallus gallus (Chicken), this protein is Proteasome activator complex subunit 3.